Here is a 232-residue protein sequence, read N- to C-terminus: Large ribosomal subunit protein uL1 (232 aa).

Belongs to the universal ribosomal protein uL1 family. In terms of assembly, part of the 50S ribosomal subunit.

Functionally, binds directly to 23S rRNA. The L1 stalk is quite mobile in the ribosome, and is involved in E site tRNA release. Its function is as follows. Protein L1 is also a translational repressor protein, it controls the translation of the L11 operon by binding to its mRNA. This is Large ribosomal subunit protein uL1 from Xylella fastidiosa (strain M23).